Reading from the N-terminus, the 161-residue chain is MRKLTALFVASTLALGAANLAHAADTTTAAPADAKPMMHHKGKFGPHQDMMFKDLNLTDAQKQQIREIMKGQRDQMKRPPLEERRAMHDIIASDTFDKVKAEAQIAKMEEQRKANMLAHMETQNKIYNILTPEQKKQFNANFEKRLTERPAAKGKMPATAE.

The first 23 residues, 1–23, serve as a signal peptide directing secretion; the sequence is MRKLTALFVASTLALGAANLAHA. The tract at residues 140–161 is disordered; the sequence is ANFEKRLTERPAAKGKMPATAE. A compositionally biased stretch (basic and acidic residues) spans 142–151; sequence FEKRLTERPA.

The protein belongs to the CpxP/Spy family. As to quaternary structure, homodimer.

The protein resides in the periplasm. An ATP-independent periplasmic chaperone, decreases protein aggregation and helps protein refolding. Binds substrate over a large region of its convex inner surface. Substrate protein folds while it is bound to chaperone. Increasing Spy flexibility increases its substrate affinity and overall chaperone activity (shown for 3 different substrates). Protects proteins in vitro against tannin inactivation; tannins have antimicrobial activity. Overexpression enhances the stability of otherwise unstable periplasmic proteins. This Escherichia coli (strain K12) protein is Periplasmic chaperone Spy.